The chain runs to 176 residues: Tubulin polymerization-promoting protein family member 3 (176 aa).

The disordered stretch occupies residues 126-152 (TDTSKYTGSHKERFDESGKGKGKGGRE). Over residues 134–152 (SHKERFDESGKGKGKGGRE) the composition is skewed to basic and acidic residues.

It belongs to the TPPP family.

Its subcellular location is the cytoplasm. The protein localises to the cytoskeleton. In terms of biological role, regulator of microtubule dynamic that has microtubule bundling activity. The protein is Tubulin polymerization-promoting protein family member 3 (tppp3) of Xenopus tropicalis (Western clawed frog).